Consider the following 287-residue polypeptide: ATP synthase gamma chain (287 aa).

Belongs to the ATPase gamma chain family. As to quaternary structure, F-type ATPases have 2 components, CF(1) - the catalytic core - and CF(0) - the membrane proton channel. CF(1) has five subunits: alpha(3), beta(3), gamma(1), delta(1), epsilon(1). CF(0) has three main subunits: a, b and c. The F(1)F(0) complex interacts with SpoIIIJ and YqjG; YqgA is found in the same complex. Interacts with FloT.

It is found in the cell membrane. It localises to the membrane raft. In terms of biological role, produces ATP from ADP in the presence of a proton gradient across the membrane. The gamma chain is believed to be important in regulating ATPase activity and the flow of protons through the CF(0) complex. In Bacillus subtilis (strain 168), this protein is ATP synthase gamma chain.